The primary structure comprises 458 residues: MYVPEEIIETIKMIEYQNLDIRTTTLGVNLKDCADKDLDLLKENIYNKITSYGGNLVETANKVSQKYGIPIVNKRISVTPIGLIMGSTLKGLSDEEAIDACVEVGITLDNIAKEVGVDFIGGYSALVQKRATPEEKMLIRSIPKLMTKTDRVCASVNVATTKAGINMYAVKKMGEIVKETSEITKDAIGCAKIVVFCNAPEDNPFMAGAFHGPGEGDAVINAGVSGPGVVRAVVEQLKGKDIGTVSDEIKKTAFKITRMGELVGKEVASELGVDFGIVDLSLAPTPAIGDSIANILEAVGLERCGTHGTTAALAMLNDAVKKGGAMASSNVGGLSGAFIPVSEDAGMIEAVEVGALRLEKLEAMTCVCSVGLDMIAVPGKTPASTLSAIIADEMAIGMINKKTTAVRIIPVPGKDVGDSVEYGGLLGTAPIMPVSEFSSEEFIERGGRIPAPIQSLTN.

The protein belongs to the UPF0210 family.

The polypeptide is UPF0210 protein MmarC6_1246 (Methanococcus maripaludis (strain C6 / ATCC BAA-1332)).